Here is an 87-residue protein sequence, read N- to C-terminus: Small ribosomal subunit protein bS20 (87 aa).

The segment at 1-28 (MANSAQARKRARQASAQRDHNMSQRSEL) is disordered. Residues 17–28 (QRDHNMSQRSEL) show a composition bias toward basic and acidic residues.

Belongs to the bacterial ribosomal protein bS20 family.

In terms of biological role, binds directly to 16S ribosomal RNA. This is Small ribosomal subunit protein bS20 from Thiobacillus denitrificans (strain ATCC 25259 / T1).